A 63-amino-acid polypeptide reads, in one-letter code: Prokaryotic ubiquitin-like protein Pup (63 aa).

Residues 1-28 (MSDRQTQIPAGGGREDDHDDQVQSAGQV) are disordered. Residues 19 to 57 (DDQVQSAGQVQVNTEGVDDLLDEIDGLLENNAEEFVRSY) form an ARC ATPase binding region. Glu63 participates in a covalent cross-link: Isoglutamyl lysine isopeptide (Glu-Lys) (interchain with K-? in acceptor proteins).

Belongs to the prokaryotic ubiquitin-like protein family. As to quaternary structure, strongly interacts with the proteasome-associated ATPase ARC through a hydrophobic interface; the interacting region of Pup lies in its C-terminal half. There is one Pup binding site per ARC hexamer ring.

It participates in protein degradation; proteasomal Pup-dependent pathway. Functionally, protein modifier that is covalently attached to lysine residues of substrate proteins, thereby targeting them for proteasomal degradation. The tagging system is termed pupylation. This chain is Prokaryotic ubiquitin-like protein Pup, found in Corynebacterium efficiens (strain DSM 44549 / YS-314 / AJ 12310 / JCM 11189 / NBRC 100395).